Consider the following 209-residue polypeptide: uncharacterized protein (209 aa).

An N-terminal signal peptide occupies residues 1-17 (MKRLVTGLLALSLFLAA). Positions 17-105 (ACGQDSDQQK…SNNQANNNQK (89 aa)) are disordered. Cysteine 18 carries N-palmitoyl cysteine lipidation. Cysteine 18 carries the S-diacylglycerol cysteine lipid modification. The segment covering 23 to 70 (DQQKDSNKEKDDKAKTEQQDEKTNDSSKDKKDKKDDSKDVNKDNKDNS) has biased composition (basic and acidic residues). The span at 71–105 (ANDNQQQSNSNATNNDQNQTNNNQSSNNQANNNQK) shows a compositional bias: low complexity.

The protein localises to the cell membrane. This is an uncharacterized protein from Staphylococcus aureus (strain bovine RF122 / ET3-1).